We begin with the raw amino-acid sequence, 260 residues long: 2-amino-5-formylamino-6-ribosylaminopyrimidin-4(3H)-one 5'-monophosphate deformylase (260 aa).

4 residues coordinate Fe cation: Glu-33, His-35, Asp-44, and His-112.

Belongs to the creatininase superfamily. FAPy deformylase family. Homodimer. Requires Fe(2+) as cofactor. It depends on Zn(2+) as a cofactor.

It carries out the reaction 2-amino-5-formylamino-6-(5-phospho-D-ribosylamino)pyrimidin-4(3H)-one + H2O = 2,5-diamino-6-(1-D-ribosylamino)pyrimidin-4(3H)-one 5'-phosphate + formate + H(+). It participates in cofactor biosynthesis; coenzyme F420 biosynthesis. It functions in the pathway cofactor biosynthesis; riboflavin biosynthesis. Functionally, catalyzes the hydrolysis of the formamide of 2-amino-5-formylamino-6-ribosylamino-4(3H)-pyrimidinone 5'-monophosphate (FAPy) to form 2,5-diamino-6-ribosylamino-4(3H)-pyrimidinone 5'-phosphate (APy). The sequence is that of 2-amino-5-formylamino-6-ribosylaminopyrimidin-4(3H)-one 5'-monophosphate deformylase from Methanococcus voltae (strain ATCC BAA-1334 / A3).